The following is a 625-amino-acid chain: tRNA uridine 5-carboxymethylaminomethyl modification enzyme MnmG (625 aa).

14–19 (GAGHAG) is a binding site for FAD. Residue 273–287 (GPRYCPSIEDKIVRF) coordinates NAD(+).

The protein belongs to the MnmG family. Homodimer. Heterotetramer of two MnmE and two MnmG subunits. FAD serves as cofactor.

It is found in the cytoplasm. In terms of biological role, NAD-binding protein involved in the addition of a carboxymethylaminomethyl (cmnm) group at the wobble position (U34) of certain tRNAs, forming tRNA-cmnm(5)s(2)U34. This Clostridium botulinum (strain Loch Maree / Type A3) protein is tRNA uridine 5-carboxymethylaminomethyl modification enzyme MnmG.